Reading from the N-terminus, the 629-residue chain is Ionotropic receptor 75a (629 aa).

Over 1–335 (MQLVQLANFV…GDVFLQPFSP (335 aa)) the chain is Extracellular. N-linked (GlcNAc...) asparagine glycosylation is found at N61, N112, N126, N144, N166, and N232. Residues 336–356 (LVWYLFGGVLSLIGVLLWITF) traverse the membrane as a helical segment. At 357-374 (YMECKRMQKRWRLDYLPS) the chain is on the cytoplasmic side. A helical transmembrane segment spans residues 375–395 (LLSTFLISFGAACIQSSSLIP). The Extracellular segment spans residues 396–402 (RSAGGRL). The helical transmembrane segment at 403–423 (IYFALFLISFIMYNYYTSVVV) threads the bilayer. The Cytoplasmic segment spans residues 424–592 (SSLLSSPVKS…NFVITVGMEY (169 aa)). The chain crosses the membrane as a helical span at residues 593–613 (VAPLLLMLICADILVVVILLV). Residues 614–629 (ELAWKRFFTRHLTFHP) are Extracellular-facing.

This sequence belongs to the glutamate-gated ion channel (TC 1.A.10.1) family. As to expression, expressed in acetic-acid-sensing neurons in the antennal coeloconic 2 (ac2) and antennal coeloconic 3 (ac3) sensilla class of sensory hairs (at protein level).

Its subcellular location is the cell membrane. It localises to the cell projection. It is found in the dendrite. In terms of biological role, odorant receptor for acetic and propionic acid. Functions as part of an olfactory receptor complex including the ionotropic receptor coreceptor Ir8a. In Drosophila melanogaster (Fruit fly), this protein is Ionotropic receptor 75a.